A 192-amino-acid chain; its full sequence is Xanthine phosphoribosyltransferase (192 aa).

Xanthine is bound by residues L20 and N27. 128–132 is a 5-phospho-alpha-D-ribose 1-diphosphate binding site; it reads AHGEA. K156 contributes to the xanthine binding site.

The protein belongs to the purine/pyrimidine phosphoribosyltransferase family. Xpt subfamily. Homodimer.

It is found in the cytoplasm. The enzyme catalyses XMP + diphosphate = xanthine + 5-phospho-alpha-D-ribose 1-diphosphate. Its pathway is purine metabolism; XMP biosynthesis via salvage pathway; XMP from xanthine: step 1/1. Functionally, converts the preformed base xanthine, a product of nucleic acid breakdown, to xanthosine 5'-monophosphate (XMP), so it can be reused for RNA or DNA synthesis. The polypeptide is Xanthine phosphoribosyltransferase (Lactobacillus gasseri (strain ATCC 33323 / DSM 20243 / BCRC 14619 / CIP 102991 / JCM 1131 / KCTC 3163 / NCIMB 11718 / NCTC 13722 / AM63)).